The chain runs to 369 residues: 4-hydroxy-3-methylbut-2-en-1-yl diphosphate synthase (flavodoxin) (369 aa).

[4Fe-4S] cluster contacts are provided by cysteine 270, cysteine 273, cysteine 305, and glutamate 312.

The protein belongs to the IspG family. [4Fe-4S] cluster serves as cofactor.

It carries out the reaction (2E)-4-hydroxy-3-methylbut-2-enyl diphosphate + oxidized [flavodoxin] + H2O + 2 H(+) = 2-C-methyl-D-erythritol 2,4-cyclic diphosphate + reduced [flavodoxin]. It participates in isoprenoid biosynthesis; isopentenyl diphosphate biosynthesis via DXP pathway; isopentenyl diphosphate from 1-deoxy-D-xylulose 5-phosphate: step 5/6. Its function is as follows. Converts 2C-methyl-D-erythritol 2,4-cyclodiphosphate (ME-2,4cPP) into 1-hydroxy-2-methyl-2-(E)-butenyl 4-diphosphate. The polypeptide is 4-hydroxy-3-methylbut-2-en-1-yl diphosphate synthase (flavodoxin) (Pseudomonas fluorescens (strain SBW25)).